The sequence spans 411 residues: Serine hydroxymethyltransferase (411 aa).

(6S)-5,6,7,8-tetrahydrofolate-binding positions include Leu-113 and 117-119; that span reads GHL. N6-(pyridoxal phosphate)lysine is present on Lys-222. Residues Glu-238 and 346-348 each bind (6S)-5,6,7,8-tetrahydrofolate; that span reads SPF.

This sequence belongs to the SHMT family. Homodimer. The cofactor is pyridoxal 5'-phosphate.

Its subcellular location is the cytoplasm. It catalyses the reaction (6R)-5,10-methylene-5,6,7,8-tetrahydrofolate + glycine + H2O = (6S)-5,6,7,8-tetrahydrofolate + L-serine. Its pathway is one-carbon metabolism; tetrahydrofolate interconversion. It participates in amino-acid biosynthesis; glycine biosynthesis; glycine from L-serine: step 1/1. Catalyzes the reversible interconversion of serine and glycine with tetrahydrofolate (THF) serving as the one-carbon carrier. This reaction serves as the major source of one-carbon groups required for the biosynthesis of purines, thymidylate, methionine, and other important biomolecules. Also exhibits THF-independent aldolase activity toward beta-hydroxyamino acids, producing glycine and aldehydes, via a retro-aldol mechanism. The polypeptide is Serine hydroxymethyltransferase (Prochlorococcus marinus (strain NATL1A)).